The sequence spans 160 residues: Transcriptional regulator MraZ (160 aa).

2 consecutive SpoVT-AbrB domains span residues 5–50 (KFDT…GDQV) and 93–136 (AVEC…SQAV).

This sequence belongs to the MraZ family. Forms oligomers.

Its subcellular location is the cytoplasm. The protein resides in the nucleoid. This is Transcriptional regulator MraZ from Geobacter sp. (strain M21).